A 632-amino-acid chain; its full sequence is Extracellular metalloproteinase 2 (632 aa).

Residues 1-19 form the signal peptide; sequence MHGLLLAGLAAALPLGVAG. Residues 20-244 constitute a propeptide that is removed on maturation; that stretch reads LPARQQSGLS…VHNVVDYVAS (225 aa). The N-linked (GlcNAc...) asparagine glycan is linked to Asn270. His429 contacts Zn(2+). Residue Glu430 is part of the active site. A Zn(2+)-binding site is contributed by His433.

It belongs to the peptidase M36 family. Requires Zn(2+) as cofactor.

Its subcellular location is the secreted. Functionally, secreted metalloproteinase probably acting as a virulence factor. In Trichophyton rubrum (Athlete's foot fungus), this protein is Extracellular metalloproteinase 2 (MEP2).